The chain runs to 156 residues: Small ribosomal subunit protein uS7 (156 aa).

The protein belongs to the universal ribosomal protein uS7 family. Part of the 30S ribosomal subunit. Contacts proteins S9 and S11.

One of the primary rRNA binding proteins, it binds directly to 16S rRNA where it nucleates assembly of the head domain of the 30S subunit. Is located at the subunit interface close to the decoding center, probably blocks exit of the E-site tRNA. The polypeptide is Small ribosomal subunit protein uS7 (Buchnera aphidicola subsp. Baizongia pistaciae (strain Bp)).